Reading from the N-terminus, the 341-residue chain is Major histocompatibility complex class I-related protein 1 (341 aa).

Positions 1 to 22 are cleaved as a signal peptide; the sequence is MGELMAFLLPLIIVLMVKHSDS. An alpha-1 region spans residues 23 to 109; the sequence is RTHSLRYFRL…KRLQRHYNHS (87 aa). Residues 23–201 are antigen-binding cleft; it reads RTHSLRYFRL…EYGKDILQRT (179 aa). Residues 23 to 302 are Extracellular-facing; the sequence is RTHSLRYFRL…QESETIPLVM (280 aa). Positions 29 and 31 each coordinate 8-(9H-purin-6-yl)-2-oxa-8-azabicyclo[3.3.1]nona-3,6-diene-4,6-dicarbaldehyde. Residues Arg-31, Ser-46, and Lys-65 each coordinate 5-(2-oxoethylideneamino)-6-(D-ribitylamino)uracil. 5-(2-oxopropylideneamino)-6-(D-ribitylamino)uracil is bound by residues Arg-31, Ser-46, and Lys-65. 7-hydroxy-6-methyl-8-(1-D-ribityl)lumazine contacts are provided by Arg-31, Ser-46, and Lys-65. Residues Lys-65 and His-80 each coordinate 8-(9H-purin-6-yl)-2-oxa-8-azabicyclo[3.3.1]nona-3,6-diene-4,6-dicarbaldehyde. Lys-65 is a 2-amino-4-oxopteridine-6-carbaldehyde binding site. Pyridoxal is bound at residue Lys-65. A glycan (N-linked (GlcNAc...) asparagine) is linked at Asn-107. The segment at 110 to 201 is alpha-2; sequence GSHTYQRMIG…EYGKDILQRT (92 aa). Arg-116 serves as a coordination point for 8-(9H-purin-6-yl)-2-oxa-8-azabicyclo[3.3.1]nona-3,6-diene-4,6-dicarbaldehyde. 5-(2-oxoethylideneamino)-6-(D-ribitylamino)uracil is bound by residues Arg-116, Tyr-174, and Gln-175. Residues Arg-116, Tyr-174, and Gln-175 each coordinate 5-(2-oxopropylideneamino)-6-(D-ribitylamino)uracil. Positions 116, 174, and 175 each coordinate 7-hydroxy-6-methyl-8-(1-D-ribityl)lumazine. Intrachain disulfides connect Cys-120-Cys-183 and Cys-222-Cys-278. Residues 202 to 293 are alpha-3; sequence EPPLVRVNRK…GVHMVLQVPQ (92 aa). An Ig-like C1-type domain is found at 203-299; it reads PPLVRVNRKE…QVPQESETIP (97 aa). The segment at 294–302 is connecting peptide; it reads ESETIPLVM. Residues 303–323 traverse the membrane as a helical segment; the sequence is KAVSGSIVLVIVLAGVGVLVW. Over 324 to 341 the chain is Cytoplasmic; sequence RRRPREQNGAIYLPTPDR.

It belongs to the MHC class I family. Heterotrimer that consists of MR1, B2M and metabolite antigen. Major classes of metabolite ligands presented by MR1 include riboflavin-related antigens, pyrimidines and ribityl lumazines, nucleobase adducts and folate derivatives. Forms reversible covalent Schiff base complexes with microbial pyrimidine-based metabolite, which serves as a molecular switch triggering complete folding, stable association with B2M and translocation of the ternary complex from endoplasmic reticulum to the plasma membrane. Alternatively, forms non-Schiff base complexes with ribityl lumazines. On antigen-presenting cells, the ternary complex interacts with TCR on MR1-restricted T cells. Interacts with TAPBP and TAPBPL chaperones in the endoplasmic reticulum. TAPBP associated or not with MHC class I peptide loading complex binds ligand-free MR1 or MR1-B2M complex, providing for stable MR1 pools ready for metabolite antigen processing. TAPBPL interacts with MR1 in a ligand-independent way; this interaction may stabilize MR1 pool and facilitate ligand loading and dissociation. Structurally, MR1-B2M heterodimer adopts a topology similar to classical MHC class I molecules, with alpha-1 and alpha-2 domains of MR1 forming the antigen-binding cleft composed of two alpha-helices resting on a floor of 7-stranded anti-parallel beta-pleated sheet. MR1-B2M heterodimer (via alpha-helices) interacts with TCR (via CDR domains). Post-translationally, N-glycosylated.

Its subcellular location is the cell membrane. The protein localises to the endoplasmic reticulum membrane. The protein resides in the golgi apparatus membrane. It is found in the early endosome membrane. It localises to the late endosome membrane. Functionally, antigen-presenting molecule specialized in displaying microbial pyrimidine-based metabolites to alpha-beta T cell receptors (TCR) on innate-type mucosal-associated invariant T (MAIT) cells. In complex with B2M preferentially presents riboflavin-derived metabolites to semi-invariant TCRs on MAIT cells, guiding immune surveillance of the microbial metabolome at mucosal epithelial barriers. Signature pyrimidine-based microbial antigens are generated via non-enzymatic condensation of metabolite intermediates of the riboflavin pathway with by-products arising from other metabolic pathways such as glycolysis. Typical potent antigenic metabolites are 5-(2-oxoethylideneamino)-6-D-ribitylaminouracil (5-OE-RU) and 5-(2-oxopropylideneamino)-6-D-ribitylaminouracil (5-OP-RU), products of condensation of 5-amino-6-D-ribityaminouracil (5-A-RU) with glyoxal or methylglyoxal by-products, respectively. May present microbial antigens to various MAIT cell subsets, providing for unique recognition of diverse microbes, including pathogens that do not synthesize riboflavin. Upon antigen recognition, elicits rapid innate-type MAIT cell activation to eliminate pathogenic microbes by directly killing infected cells. During T cell development, drives thymic selection and post-thymic terminal differentiation of MAIT cells in a process dependent on commensal microflora. Acts as an immune sensor of cancer cell metabolome. May present a tumor-specific or -associated metabolite essential for cancer cell survival to a pan-cancer TCR on a non-MAIT CD8-positive T cell clone, triggering T cell-mediated killing of a wide range of cancer cell types. May present tumor-enriched pyridoxal and pyridoxal 5'-phosphate antigens, enabling preferential recognition of cancer cells. Presents nucleobase carbonyl adducts generated during oxidative stress. Captures M3Ade, a nucleobase adduct composed of one adenine modified by a malondialdehyde trimer, for recognition by MR1-restricted T cell clones expressing a polyclonal TCR repertoire. In Pan troglodytes (Chimpanzee), this protein is Major histocompatibility complex class I-related protein 1.